The primary structure comprises 494 residues: NADH-quinone oxidoreductase subunit N (494 aa).

The next 14 helical transmembrane spans lie at leucine 13–isoleucine 33, phenylalanine 43–valine 63, methionine 82–glycine 102, leucine 117–glycine 137, leucine 138–phenylalanine 158, tyrosine 169–alanine 189, leucine 209–valine 229, proline 243–leucine 263, leucine 277–leucine 297, isoleucine 311–alanine 331, isoleucine 332–leucine 352, alanine 380–glycine 400, glutamine 412–leucine 432, and isoleucine 461–leucine 481.

The protein belongs to the complex I subunit 2 family. As to quaternary structure, NDH-1 is composed of 13 different subunits. Subunits NuoA, H, J, K, L, M, N constitute the membrane sector of the complex.

Its subcellular location is the cell inner membrane. It catalyses the reaction a quinone + NADH + 5 H(+)(in) = a quinol + NAD(+) + 4 H(+)(out). Its function is as follows. NDH-1 shuttles electrons from NADH, via FMN and iron-sulfur (Fe-S) centers, to quinones in the respiratory chain. The immediate electron acceptor for the enzyme in this species is believed to be ubiquinone. Couples the redox reaction to proton translocation (for every two electrons transferred, four hydrogen ions are translocated across the cytoplasmic membrane), and thus conserves the redox energy in a proton gradient. The chain is NADH-quinone oxidoreductase subunit N from Ectopseudomonas mendocina (strain ymp) (Pseudomonas mendocina).